Reading from the N-terminus, the 191-residue chain is Probable DNA-directed RNA polymerase subunit delta (191 aa).

An HTH HARE-type domain is found at 14–83 (LSMIEVARAI…GENKWGLRSW (70 aa)). Composition is skewed to acidic residues over residues 117–136 (GDED…DFTE) and 142–191 (EYDE…EEEV). The interval 117–191 (GDEDAIDYND…DEEEEEEEEV (75 aa)) is disordered.

Belongs to the RpoE family. In terms of assembly, RNAP is composed of a core of 2 alpha, a beta and a beta' subunits. The core is associated with a delta subunit and one of several sigma factors.

Functionally, participates in both the initiation and recycling phases of transcription. In the presence of the delta subunit, RNAP displays an increased specificity of transcription, a decreased affinity for nucleic acids, and an increased efficiency of RNA synthesis because of enhanced recycling. This Streptococcus agalactiae serotype Ia (strain ATCC 27591 / A909 / CDC SS700) protein is Probable DNA-directed RNA polymerase subunit delta.